The chain runs to 1096 residues: Cohesin subunit scc-3 (1096 aa).

The segment covering 1–21 has biased composition (polar residues); the sequence is MSETPTDQSPQRMSTRNQARV. Disordered stretches follow at residues 1 to 53 and 67 to 106; these read MSET…KKRA and NLNNFSTPPKRGRPRGGGLGSARGGRAPMVRRTTTEESAE. A coiled-coil region spans residues 261-312; that stretch reads IELTQSKEKTSKQIEAEKAKLKNNSAGNEKYEALVAQRTQTEERAEEIRQII. The 86-residue stretch at 320-405 folds into the SCD domain; the sequence is FVHRYRDVVP…NKFKDRLVSM (86 aa). The interval 1057-1096 is disordered; sequence DNMSVRSGMTVTSNATMRSTASSTRGRGRGRGRSRIADDF. Residues 1060–1073 show a composition bias toward polar residues; sequence SVRSGMTVTSNATM.

It belongs to the SCC3 family. In terms of assembly, component of the cohesin complex, composed of the smc-1 and smc-3 heterodimer attached via their hinge domain, scc-1 which links them, and scc-3. Interacts with scc-1, smc-1 and tim-1. Expressed in gonadal cells.

It localises to the nucleus. The protein localises to the chromosome. Functionally, component of the cohesin complex, a complex required for the cohesion of sister chromatids after DNA replication. The cohesin complex apparently forms a large proteinaceous ring within which sister chromatids can be trapped. At anaphase, the scc-1 subunit of the complex is cleaved and dissociates from chromatin, allowing sister chromatids to segregate. The cohesin complex may also play a role in spindle pole assembly during mitosis. Plays an essential role in cell division during embryonic development. Required for the assembly of the synaptonemal complex between homologous chromosomes to promote sister chromatid cohesion during mitosis and meiosis. Has a role in stabilization of homologous chromosome associations during meiotic synapsis. Required for chromosome segregation during mitosis and meiosis. Plays a role in DNA double-strand break (DSB) repair during meiotic recombination and promotes the assembly of the 9-1-1 cell-cycle checkpoint response complex which is required for inducing apoptosis in response to DNA damage, at DNA damage sites. This Caenorhabditis elegans protein is Cohesin subunit scc-3.